Consider the following 419-residue polypeptide: Carboxypeptidase A1 (419 aa).

The N-terminal stretch at 1-16 (MKRLLILSLLLEAVCG) is a signal peptide. Positions 17–110 (NENFVGHQVL…KQQMSAFQAR (94 aa)) are cleaved as a propeptide — activation peptide. One can recognise a Peptidase M14 domain in the interval 121-414 (TYHTLDEIYE…LALLTIMDHT (294 aa)). Zn(2+)-binding residues include His179 and Glu182. Residues 179–182 (HSRE), Arg237, and 254–255 (NR) contribute to the substrate site. Residues Cys248 and Cys271 are joined by a disulfide bond. His306 is a Zn(2+) binding site. Substrate-binding positions include 307–308 (SY) and Tyr358. Glu380 (proton donor/acceptor) is an active-site residue.

The protein belongs to the peptidase M14 family. As to quaternary structure, monomer. May form a complex with proelastase 2. Zn(2+) is required as a cofactor.

It is found in the secreted. It carries out the reaction Release of a C-terminal amino acid, but little or no action with -Asp, -Glu, -Arg, -Lys or -Pro.. The enzyme catalyses leukotriene C4 + H2O = leukotriene F4 + glycine. Carboxypeptidase that catalyzes the release of a C-terminal amino acid, but has little or no action with -Asp, -Glu, -Arg, -Lys or -Pro. Catalyzes the conversion of leukotriene C4 to leukotriene F4 via the hydrolysis of an amide bond. The sequence is that of Carboxypeptidase A1 from Rattus norvegicus (Rat).